The chain runs to 99 residues: uncharacterized protein (99 aa).

The stretch at 3–68 forms a coiled coil; sequence ERLKAITNLL…EKFDSNRKFY (66 aa).

This is an uncharacterized protein from Aquifex aeolicus (strain VF5).